The primary structure comprises 332 residues: L-lactate dehydrogenase (332 aa).

Residues 29-57 (GQVG…CADK) and R99 contribute to the NAD(+) site. Substrate contacts are provided by R106, N138, and R169. N138 contacts NAD(+). Residue H193 is the Proton acceptor of the active site. T248 is a substrate binding site.

It belongs to the LDH/MDH superfamily. LDH family. In terms of assembly, homotetramer.

It localises to the cytoplasm. It catalyses the reaction (S)-lactate + NAD(+) = pyruvate + NADH + H(+). The protein operates within fermentation; pyruvate fermentation to lactate; (S)-lactate from pyruvate: step 1/1. The polypeptide is L-lactate dehydrogenase (Drosophila melanogaster (Fruit fly)).